A 262-amino-acid polypeptide reads, in one-letter code: Hydroxyethylthiazole kinase (262 aa).

Position 50 (Met50) interacts with substrate. Positions 125 and 171 each coordinate ATP. Substrate is bound at residue Gly198.

This sequence belongs to the Thz kinase family. Requires Mg(2+) as cofactor.

It carries out the reaction 5-(2-hydroxyethyl)-4-methylthiazole + ATP = 4-methyl-5-(2-phosphooxyethyl)-thiazole + ADP + H(+). It functions in the pathway cofactor biosynthesis; thiamine diphosphate biosynthesis; 4-methyl-5-(2-phosphoethyl)-thiazole from 5-(2-hydroxyethyl)-4-methylthiazole: step 1/1. Functionally, catalyzes the phosphorylation of the hydroxyl group of 4-methyl-5-beta-hydroxyethylthiazole (THZ). The polypeptide is Hydroxyethylthiazole kinase (Escherichia coli (strain 55989 / EAEC)).